The following is a 283-amino-acid chain: MVVLDSVSTLRESIQKWRKAGLTIGFVPTMGNLHAGHLSLVKQARQKSDKVIVSIFVNPLQFGPDEDYDRYPRTFEADKALLQQHNADAVFCPSVDEMYPNGQAQTRVIAPEKMTSILEGAKRPGHFDGVTTVVAKLFNMVQPDIAILGQKDFQQFAVLQQMVEDLALSVELIRAPIVRDETGLALSSRNQYLTEIQRSVAPKLFVALQSIEMAIRSGNKNYSSLCQIATQQVLSDGFDAVDYIQVLNASSLEEPQQGDQALVIVAAAKLGQTRLLDNVLVSL.

30 to 37 (MGNLHAGH) serves as a coordination point for ATP. Residue His-37 is the Proton donor of the active site. Position 61 (Gln-61) interacts with (R)-pantoate. Residue Gln-61 coordinates beta-alanine. An ATP-binding site is contributed by 149 to 152 (GQKD). Residue Gln-155 participates in (R)-pantoate binding. Residues Val-178 and 186-189 (LSSR) contribute to the ATP site.

It belongs to the pantothenate synthetase family. As to quaternary structure, homodimer.

The protein resides in the cytoplasm. The catalysed reaction is (R)-pantoate + beta-alanine + ATP = (R)-pantothenate + AMP + diphosphate + H(+). It participates in cofactor biosynthesis; (R)-pantothenate biosynthesis; (R)-pantothenate from (R)-pantoate and beta-alanine: step 1/1. Catalyzes the condensation of pantoate with beta-alanine in an ATP-dependent reaction via a pantoyl-adenylate intermediate. The polypeptide is Pantothenate synthetase (Hydrogenovibrio crunogenus (strain DSM 25203 / XCL-2) (Thiomicrospira crunogena)).